The chain runs to 419 residues: D-amino acid dehydrogenase (419 aa).

Position 3–17 (Val3–Tyr17) interacts with FAD.

This sequence belongs to the DadA oxidoreductase family. FAD is required as a cofactor.

The enzyme catalyses a D-alpha-amino acid + A + H2O = a 2-oxocarboxylate + AH2 + NH4(+). It participates in amino-acid degradation; D-alanine degradation; NH(3) and pyruvate from D-alanine: step 1/1. Functionally, oxidative deamination of D-amino acids. The sequence is that of D-amino acid dehydrogenase from Acinetobacter baylyi (strain ATCC 33305 / BD413 / ADP1).